Consider the following 160-residue polypeptide: Large ribosomal subunit protein eL21 (160 aa).

2 stretches are compositionally biased toward basic and acidic residues: residues 112-123 (NDQKKKEAKEKG) and 136-146 (REAHFVRTNGK). Residues 112-146 (NDQKKKEAKEKGTWVQLNGQPAPPREAHFVRTNGK) form a disordered region.

It belongs to the eukaryotic ribosomal protein eL21 family. As to quaternary structure, component of the large ribosomal subunit.

The protein localises to the cytoplasm. Its subcellular location is the cytosol. It localises to the endoplasmic reticulum. Functionally, component of the large ribosomal subunit. The ribosome is a large ribonucleoprotein complex responsible for the synthesis of proteins in the cell. This is Large ribosomal subunit protein eL21 (Rpl21) from Rattus norvegicus (Rat).